Reading from the N-terminus, the 139-residue chain is Histone H2B (139 aa).

Residues 1-10 (MAPKAAEKKP) show a composition bias toward basic and acidic residues. Positions 1 to 47 (MAPKAAEKKPSTGGKAPAGGKAPAEKKEAGKKTAASGEKKKRTKARK) are disordered. N6-acetyllysine; alternate is present on residues lysine 8 and lysine 9. Residues lysine 8 and lysine 9 each participate in a glycyl lysine isopeptide (Lys-Gly) (interchain with G-Cter in SUMO); alternate cross-link. The segment covering 11-22 (STGGKAPAGGKA) has biased composition (low complexity). Lysine 15 is subject to N6-acetyllysine. Lysine 26 carries the N6-acetyllysine; alternate modification. Residue lysine 26 forms a Glycyl lysine isopeptide (Lys-Gly) (interchain with G-Cter in SUMO); alternate linkage. A Glycyl lysine isopeptide (Lys-Gly) (interchain with G-Cter in SUMO) cross-link involves residue lysine 27. Lysine 133 is covalently cross-linked (Glycyl lysine isopeptide (Lys-Gly) (interchain with G-Cter in ubiquitin)).

It belongs to the histone H2B family. As to quaternary structure, the nucleosome is a histone octamer containing two molecules each of H2A, H2B, H3 and H4 assembled in one H3-H4 heterotetramer and two H2A-H2B heterodimers. The octamer wraps approximately 147 bp of DNA. In terms of processing, monoubiquitinated by the UBC2-BRE1 complex to form H2BK123ub1. H2BK123ub1 gives a specific tag for epigenetic transcriptional activation and is also prerequisite for H3K4me and H3K79me formation. H2BK123ub1 also modulates the formation of double-strand breaks during meiosis and is a prerequisite for DNA-damage checkpoint activation. Acetylated by GCN5 to form H2BK11ac and H2BK16ac. H2BK16ac can also be formed by ESA1. Acetylation of N-terminal lysines and particularly formation of H2BK11acK16ac has a positive effect on transcription. Post-translationally, sumoylation to form H2BK6su or H2BK7su, and probably also H2BK16su or H2BK17su, occurs preferentially near the telomeres and represses gene transcription.

The protein resides in the nucleus. Its subcellular location is the chromosome. Core component of nucleosome. Nucleosomes wrap and compact DNA into chromatin, limiting DNA accessibility to the cellular machineries which require DNA as a template. Histones thereby play a central role in transcription regulation, DNA repair, DNA replication and chromosomal stability. DNA accessibility is regulated via a complex set of post-translational modifications of histones, also called histone code, and nucleosome remodeling. This is Histone H2B (HTB1) from Coccidioides immitis (strain RS) (Valley fever fungus).